The primary structure comprises 328 residues: Radiation response metalloprotease IrrE (328 aa).

Positions 1-31 (MPSANVSPPCPSGVRGGGMGPKAKAEASKPH) are disordered. His118 is a binding site for Zn(2+). The active site involves Glu119. Zn(2+)-binding residues include His122 and Glu149. Disordered regions lie at residues 217-238 (PREQ…LTVR) and 309-328 (RLGR…DAAQ).

In terms of biological role, plays a central regulatory role in DNA repair and protection pathways in response to radiation stress. Acts as a site-specific metalloprotease that cleaves and inactivates the repressor protein DdrO, resulting in induced expression of genes required for DNA repair and cell survival after exposure to radiation. Regulates the expression of dozens of proteins from different pathways, including the important DNA repair proteins RecA and PprA. Binds to the promoters of recA and pprA. This is Radiation response metalloprotease IrrE from Deinococcus radiodurans (strain ATCC 13939 / DSM 20539 / JCM 16871 / CCUG 27074 / LMG 4051 / NBRC 15346 / NCIMB 9279 / VKM B-1422 / R1).